A 331-amino-acid chain; its full sequence is Anthranilate phosphoribosyltransferase (331 aa).

5-phospho-alpha-D-ribose 1-diphosphate contacts are provided by residues Gly79, 82-83 (GD), Thr87, 89-92 (NIST), 107-115 (KHGNYGATS), and Ala119. Gly79 is an anthranilate binding site. Residue Ser91 coordinates Mg(2+). Residue Asn110 participates in anthranilate binding. Residue Arg165 participates in anthranilate binding. Mg(2+) is bound by residues Asp223 and Glu224.

This sequence belongs to the anthranilate phosphoribosyltransferase family. As to quaternary structure, homodimer. Mg(2+) serves as cofactor.

The enzyme catalyses N-(5-phospho-beta-D-ribosyl)anthranilate + diphosphate = 5-phospho-alpha-D-ribose 1-diphosphate + anthranilate. It functions in the pathway amino-acid biosynthesis; L-tryptophan biosynthesis; L-tryptophan from chorismate: step 2/5. Its function is as follows. Catalyzes the transfer of the phosphoribosyl group of 5-phosphorylribose-1-pyrophosphate (PRPP) to anthranilate to yield N-(5'-phosphoribosyl)-anthranilate (PRA). The chain is Anthranilate phosphoribosyltransferase from Bacteroides fragilis (strain ATCC 25285 / DSM 2151 / CCUG 4856 / JCM 11019 / LMG 10263 / NCTC 9343 / Onslow / VPI 2553 / EN-2).